Consider the following 386-residue polypeptide: Lipid-A-disaccharide synthase (386 aa).

Belongs to the LpxB family.

The catalysed reaction is a lipid X + a UDP-2-N,3-O-bis[(3R)-3-hydroxyacyl]-alpha-D-glucosamine = a lipid A disaccharide + UDP + H(+). It functions in the pathway bacterial outer membrane biogenesis; LPS lipid A biosynthesis. Its function is as follows. Condensation of UDP-2,3-diacylglucosamine and 2,3-diacylglucosamine-1-phosphate to form lipid A disaccharide, a precursor of lipid A, a phosphorylated glycolipid that anchors the lipopolysaccharide to the outer membrane of the cell. The chain is Lipid-A-disaccharide synthase from Chromobacterium violaceum (strain ATCC 12472 / DSM 30191 / JCM 1249 / CCUG 213 / NBRC 12614 / NCIMB 9131 / NCTC 9757 / MK).